The primary structure comprises 139 residues: Actin-depolymerizing factor 2 (139 aa).

In terms of domain architecture, ADF-H spans 7–139; it reads GLAVSDECKV…SLDIVKSRTN (133 aa).

It belongs to the actin-binding proteins ADF family. Expressed in pollen.

Functionally, actin-depolymerizing protein. Severs actin filaments (F-actin) and binds to actin monomers. This Zea mays (Maize) protein is Actin-depolymerizing factor 2 (ADF2).